A 577-amino-acid chain; its full sequence is Arginine--tRNA ligase (577 aa).

The short motif at 122–132 (PNVAKEMHVGH) is the 'HIGH' region element.

The protein belongs to the class-I aminoacyl-tRNA synthetase family. Monomer.

It is found in the cytoplasm. It catalyses the reaction tRNA(Arg) + L-arginine + ATP = L-arginyl-tRNA(Arg) + AMP + diphosphate. The sequence is that of Arginine--tRNA ligase from Escherichia coli O8 (strain IAI1).